An 819-amino-acid polypeptide reads, in one-letter code: Deubiquitinase MYSM1 (819 aa).

The segment covering 1–12 has biased composition (acidic residues); that stretch reads MEAEEADVDVEG. The interval 1–29 is disordered; that stretch reads MEAEEADVDVEGDVAAAAQPGNDESTASV. A Phosphoserine modification is found at serine 107. One can recognise an SANT domain in the interval 113 to 164; it reads SHSVKWTVEEKELFEQGLAKFGRRWTKIATLLKSRTVLQVKSYARQYFKNKV. Lysine 184 participates in a covalent cross-link: Glycyl lysine isopeptide (Lys-Gly) (interchain with G-Cter in SUMO2). Serine 215 carries the post-translational modification Phosphoserine. Disordered stretches follow at residues 228–247, 260–279, and 318–347; these read ELTSQTSQNSGSHLTLDVPN, QEGPLAKSSGESLQNVKQGE, and LHRGEVREEAKHSPSPEPCERQDSSGNEML. Residues 230-240 are compositionally biased toward polar residues; sequence TSQTSQNSGSH. Position 233 is a phosphothreonine (threonine 233). A compositionally biased stretch (basic and acidic residues) spans 318–340; sequence LHRGEVREEAKHSPSPEPCERQD. Serine 332 is modified (phosphoserine). An SWIRM domain is found at 363 to 461; that stretch reads LKPPEQEVEI…FGCEQAVYNR (99 aa). In terms of domain architecture, MPN spans 568-700; sequence VKVAAEALLI…PLPYSQITCL (133 aa). Histidine 647, histidine 649, and aspartate 660 together coordinate Zn(2+). The JAMM motif motif lies at 647–660; sequence HSHPAFDPNPSLRD. The LXXLL motif motif lies at 765–769; it reads LQKLL.

This sequence belongs to the peptidase M67A family. MYSM1 subfamily. Component of a large chromatin remodeling complex, at least composed of MYSM1, PCAF, RBM10 and KIF11/TRIP5. Binds histones.

It localises to the nucleus. The protein resides in the cytoplasm. In terms of biological role, metalloprotease with deubiquitinase activity that plays important regulator roles in hematopoietic stem cell function, blood cell production and immune response. Participates in the normal programming of B-cell responses to antigen after the maturation process. Within the cytoplasm, plays critical roles in the repression of innate immunity and autoimmunity. Removes 'Lys-63'-linked polyubiquitins from TRAF3 and TRAF6 complexes. Attenuates NOD2-mediated inflammation and tissue injury by promoting 'Lys-63'-linked deubiquitination of RIPK2 component. Suppresses the CGAS-STING1 signaling pathway by cleaving STING1 'Lys-63'-linked ubiquitin chains. In the nucleus, acts as a hematopoietic transcription regulator derepressing a range of genes essential for normal stem cell differentiation including EBF1 and PAX5 in B-cells, ID2 in NK-cell progenitor or FLT3 in dendritic cell precursors. Deubiquitinates monoubiquitinated histone H2A, a specific tag for epigenetic transcriptional repression, leading to dissociation of histone H1 from the nucleosome. This chain is Deubiquitinase MYSM1 (Mysm1), found in Mus musculus (Mouse).